Here is a 167-residue protein sequence, read N- to C-terminus: UPF0587 protein F46B6.12 (167 aa).

Residues Cys-34, Cys-37, Cys-68, and Cys-71 each contribute to the Zn(2+) site.

It belongs to the UPF0587 family.

This is UPF0587 protein F46B6.12 from Caenorhabditis elegans.